A 451-amino-acid polypeptide reads, in one-letter code: Phosphoglucosamine mutase (451 aa).

Ser107 acts as the Phosphoserine intermediate in catalysis. Residues Ser107, Asp246, Asp248, and Asp250 each coordinate Mg(2+). A Phosphoserine modification is found at Ser107.

The protein belongs to the phosphohexose mutase family. The cofactor is Mg(2+). In terms of processing, activated by phosphorylation.

The catalysed reaction is alpha-D-glucosamine 1-phosphate = D-glucosamine 6-phosphate. In terms of biological role, catalyzes the conversion of glucosamine-6-phosphate to glucosamine-1-phosphate. The polypeptide is Phosphoglucosamine mutase (Azoarcus sp. (strain BH72)).